The primary structure comprises 204 residues: uncharacterized protein (204 aa).

6 consecutive transmembrane segments (helical) span residues 19–39 (TANP…LLNL), 42–62 (AGLF…GGIA), 78–98 (GTVA…LLVI), 116–136 (PVAM…MFIA), 143–163 (GIQV…AGEI), and 167–187 (ALIT…AMYV).

This sequence belongs to the acetate uptake transporter (AceTr) (TC 2.A.96) family.

It localises to the cell membrane. This is an uncharacterized protein from Methanothermobacter thermautotrophicus (strain ATCC 29096 / DSM 1053 / JCM 10044 / NBRC 100330 / Delta H) (Methanobacterium thermoautotrophicum).